The primary structure comprises 431 residues: MRGSAAAAAATVTRVAQRVVAPSAATPGGALPLSWLDRYPTQRALIESLHVFKGRADAAVAPAAAIERALAAALVSYYPIAGRLAERGDGGELVVDCTGEGVWFIEATASCSLEDVDYLEYPLMVDKDELLPHPTYPASESHPEDSLILLVQVTQFACGGFVVGFRFSHAAAPRPDGAPPPVPRHGHLHRLHRPLQGEVPGADGPPVQRVRGAHRQGVAVADARGGVRPGVPRPRVLRHERAPRAPARAPGRLLRQLLLHHAGDGGGGGGGGRVGERRGEADPGGEEAAPGGVRAVERRRRRRRGRPVPDHLRLPDAAGLRLVAAGVRRGGLRVGRPRPRRAAHQPRLHRHLHPRPPLRPQARRPPHHPVRRRRRRRRLPQRHDAPRLITERAHRPPPPTSPAQFDSFFFSFFFWVFSLLSLYARHGIHSP.

His-169 (proton acceptor) is an active-site residue. Disordered stretches follow at residues 220–247, 260–313, and 331–400; these read VADA…RAPA, HHAG…DHLR, and GLRV…PPPT. A compositionally biased stretch (low complexity) spans 224 to 234; that stretch reads RGGVRPGVPRP. Residues 264–273 are compositionally biased toward gly residues; that stretch reads DGGGGGGGGR. Basic residues-rich tracts occupy residues 297–306 and 335–380; these read ERRRRRRRGR and GRPR…RRLP. Residues 381–394 show a composition bias toward basic and acidic residues; sequence QRHDAPRLITERAH.

The protein belongs to the plant acyltransferase family.

Functionally, involved in the incorporation of ferulate into the cell wall. May act as arabinoxylan feruloyl transferase. In Oryza sativa subsp. japonica (Rice), this protein is Acyl transferase 8.